A 92-amino-acid chain; its full sequence is MLKNSFFSIILKEQEENKENRGSVEFQVVSFTNKIRKLTSHLELHKKDYLSQRGLRKILGKRQRLLAYLSKKNRARYKELIGQLDIRERKTR.

It belongs to the universal ribosomal protein uS15 family. As to quaternary structure, part of the 30S ribosomal subunit.

The protein localises to the plastid. It localises to the chloroplast. The polypeptide is Small ribosomal subunit protein uS15c (rps15) (Guizotia abyssinica (Niger)).